We begin with the raw amino-acid sequence, 117 residues long: DNA-binding protein RdgB (117 aa).

Positions Asn82 to Arg102 form a DNA-binding region, H-T-H motif.

Belongs to the c/mor transcriptional regulatory family.

Regulates pectin lyase production in response to DNA damage. The polypeptide is DNA-binding protein RdgB (rdgB) (Pectobacterium carotovorum subsp. carotovorum (Erwinia carotovora subsp. carotovora)).